Consider the following 523-residue polypeptide: NAD(P)H-quinone oxidoreductase subunit 2 (523 aa).

Helical transmembrane passes span 30-50, 57-77, 94-114, 128-148, 182-202, 223-243, 255-275, 291-311, 317-337, 345-365, 389-409, 424-444, and 477-497; these read VGPE…DLAG, WVPP…ALQW, LAIA…LISW, AAIL…TDLV, LLVG…LYGL, AALA…AVPF, PTPV…ALAL, LLFT…ALAQ, MLAY…VCGT, VLYM…IILF, LGLS…GFFG, VLVV…IGVI, and VALV…NPLF.

It belongs to the complex I subunit 2 family. In terms of assembly, NDH-1 can be composed of about 15 different subunits; different subcomplexes with different compositions have been identified which probably have different functions.

The protein resides in the cellular thylakoid membrane. It catalyses the reaction a plastoquinone + NADH + (n+1) H(+)(in) = a plastoquinol + NAD(+) + n H(+)(out). It carries out the reaction a plastoquinone + NADPH + (n+1) H(+)(in) = a plastoquinol + NADP(+) + n H(+)(out). Its function is as follows. NDH-1 shuttles electrons from an unknown electron donor, via FMN and iron-sulfur (Fe-S) centers, to quinones in the respiratory and/or the photosynthetic chain. The immediate electron acceptor for the enzyme in this species is believed to be plastoquinone. Couples the redox reaction to proton translocation, and thus conserves the redox energy in a proton gradient. Cyanobacterial NDH-1 also plays a role in inorganic carbon-concentration. The sequence is that of NAD(P)H-quinone oxidoreductase subunit 2 from Synechococcus sp. (strain CC9311).